Reading from the N-terminus, the 391-residue chain is MDQFIKQDETGDLIETGMNVANHFLSAPIQGTNSLSKATIIPGVAPVLIGNPEQKNIQYPTTSHQGSKSKGRGSGARPIIVSSSEGGTGGTQVPEPLFAQTGQGGIVTTVYQDPTIQPTGSYRSVELAKIGKERMINRFVEKPRTSTPVTEFKRGGPGAAAQGQTIQEEGIDGNGASAGSKERSGSLSGATPYAHLSLPQQDSTPANVGIAPQSAISANEIMDLLRGMDARLQHLEQKVDKVLAQGSMVTQIKNELSTVKTTLATIEGMMATVKIMDPGNPTGVPVDELRRSFSDHVTIVSGPGDVSFSSGEEPTLYLDELARPVPKPRPAKQPKPQPVKDLAGRKVMITKMITDCVANPQMKQVFEQRLAKASTEDALNDIKRDIIRSAI.

Threonine 10, threonine 16, and threonine 39 each carry phosphothreonine. Polar residues predominate over residues 55–65; that stretch reads KNIQYPTTSHQ. Residues 55-90 form a disordered region; the sequence is KNIQYPTTSHQGSKSKGRGSGARPIIVSSSEGGTGG. A Phosphoserine modification is found at serine 69. Residues threonine 91, threonine 150, and threonine 165 each carry the phosphothreonine modification. Residues 145 to 208 are disordered; that stretch reads TSTPVTEFKR…PQQDSTPANV (64 aa). Position 188 is a phosphoserine (serine 188). The segment at 216-279 is multimerization; that stretch reads ISANEIMDLL…MATVKIMDPG (64 aa). Residues 218-245 adopt a coiled-coil conformation; that stretch reads ANEIMDLLRGMDARLQHLEQKVDKVLAQ. Threonine 250 carries the post-translational modification Phosphothreonine. Serine 257 is subject to Phosphoserine. Phosphothreonine is present on residues threonine 258 and threonine 282. Serine 292 and serine 294 each carry phosphoserine. A Phosphothreonine modification is found at threonine 298. Phosphoserine occurs at positions 301 and 374. The tract at residues 343–391 is interaction with the nucleoprotein; sequence AGRKVMITKMITDCVANPQMKQVFEQRLAKASTEDALNDIKRDIIRSAI. Position 375 is a phosphothreonine (threonine 375).

The protein belongs to the rubulavirus/avulavirus P protein family. As to quaternary structure, homotetramer. Interacts (via multimerization domain) with polymerase L; this interaction forms the polymerase L-P complex. Interacts (via N-terminus) with N0 (via Ncore); this interaction allows P to chaperon N0 to avoid N polymerization before encapsidation. Interacts (via C-terminus) with N-RNA template; this interaction positions the polymerase on the template for both transcription and replication. Interacts with host RPS6KB1 kinase; this interaction may play a role in the viral replication and transcription.

Its function is as follows. Essential cofactor of the RNA polymerase L that plays a central role in the transcription and replication by forming the polymerase complex with RNA polymerase L and recruiting L to the genomic N-RNA template for RNA synthesis. Also plays a central role in the encapsidation of nascent RNA chains by forming the encapsidation complex with the nucleocapsid protein N (N-P complex). Acts as a chaperone for newly synthesized free N protein, so-called N0, allowing encapsidation of nascent RNA chains during replication. The nucleoprotein protein N prevents excessive phosphorylation of P, which leads to down-regulation of viral transcription/ replication. Participates, together with N, in the formation of viral factories (viroplasms), which are large inclusions in the host cytoplasm where replication takes place. In Mumps virus genotype B (strain Miyahara vaccine) (MuV), this protein is Phosphoprotein.